The sequence spans 238 residues: Putative ABC transporter ATP-binding protein AF_1841 (238 aa).

One can recognise an ABC transporter domain in the interval 8-238 (IEADSVSYDY…EELLEKAGVI (231 aa)). 41–48 (GANGSGKS) contributes to the ATP binding site.

It belongs to the ABC transporter superfamily.

The protein resides in the cell membrane. Functionally, probably part of an ABC transporter complex. Responsible for energy coupling to the transport system. The sequence is that of Putative ABC transporter ATP-binding protein AF_1841 from Archaeoglobus fulgidus (strain ATCC 49558 / DSM 4304 / JCM 9628 / NBRC 100126 / VC-16).